The following is a 327-amino-acid chain: MKISILGAGSFGTAIAIALSAHGISVNLWGRDHRNITHINTYRKNLKYLPTYHLPDNIYATSNIDEVLSDNNTCIILTVPTQQLRTICTQIQHKQHMCKNTPMLICSKGIEITSLKFPSEIAEEILQYNPIFILSGPSFAKEIAEHLPCSIVLAGDNKELGESLIEKISNDVLKIIYHQDIIGVQIGAALKNIIAIACGIIAGKNLGNNAVATVITKGMNEIKTLYIAKNHSIDLHTLIGPSCLGDLILTCTTEHSRNMAFGLEIGKGRNINTLIDHNLKLVEGTSTVKPLISLAKKLNVELPICISIYNLLHENISLDKAISNILS.

NADPH-binding residues include serine 10, phenylalanine 11, arginine 31, and lysine 108. Residues lysine 108, glycine 136, and serine 138 each contribute to the sn-glycerol 3-phosphate site. An NADPH-binding site is contributed by alanine 140. Sn-glycerol 3-phosphate contacts are provided by lysine 191, aspartate 246, serine 256, arginine 257, and asparagine 258. Lysine 191 (proton acceptor) is an active-site residue. Residue arginine 257 participates in NADPH binding. NADPH-binding residues include leucine 281 and glutamate 283.

The protein belongs to the NAD-dependent glycerol-3-phosphate dehydrogenase family.

The protein resides in the cytoplasm. The catalysed reaction is sn-glycerol 3-phosphate + NAD(+) = dihydroxyacetone phosphate + NADH + H(+). It carries out the reaction sn-glycerol 3-phosphate + NADP(+) = dihydroxyacetone phosphate + NADPH + H(+). The protein operates within membrane lipid metabolism; glycerophospholipid metabolism. Functionally, catalyzes the reduction of the glycolytic intermediate dihydroxyacetone phosphate (DHAP) to sn-glycerol 3-phosphate (G3P), the key precursor for phospholipid synthesis. The polypeptide is Glycerol-3-phosphate dehydrogenase [NAD(P)+] (Ehrlichia ruminantium (strain Gardel)).